Reading from the N-terminus, the 512-residue chain is Nuclear fusion protein FUS1 (512 aa).

Residues 72–96 (IGLSIGLPIGIFCFGLLILLCYFYL) traverse the membrane as a helical segment. The tract at residues 97–512 (KRNSVSISNP…VPGDCLQEYD (416 aa)) is hydrophilic. Threonine 178 is subject to Phosphothreonine. 2 positions are modified to phosphoserine: serine 190 and serine 256. A phosphothreonine mark is found at threonine 281 and threonine 424. Positions 436–512 (QLGKTYTVIQ…VPGDCLQEYD (77 aa)) constitute an SH3 domain.

In terms of processing, O-glycosylated.

It is found in the membrane. In terms of biological role, required for cell fusion. Negatively regulates Sho1p signaling to ensure efficient cell fusion. Functionally, interacts with SHO1. This chain is Nuclear fusion protein FUS1 (FUS1), found in Saccharomyces cerevisiae (strain ATCC 204508 / S288c) (Baker's yeast).